A 347-amino-acid polypeptide reads, in one-letter code: sn-glycerol-3-phosphate import ATP-binding protein UgpC 1 (347 aa).

Residues I4–I234 form the ABC transporter domain. G36–S43 is an ATP binding site.

This sequence belongs to the ABC transporter superfamily. sn-glycerol-3-phosphate importer (TC 3.A.1.1.3) family. In terms of assembly, the complex is composed of two ATP-binding proteins (UgpC), two transmembrane proteins (UgpA and UgpE) and a solute-binding protein (UgpB).

It is found in the cell inner membrane. It catalyses the reaction sn-glycerol 3-phosphate(out) + ATP + H2O = sn-glycerol 3-phosphate(in) + ADP + phosphate + H(+). Functionally, part of the ABC transporter complex UgpBAEC involved in sn-glycerol-3-phosphate (G3P) import. Responsible for energy coupling to the transport system. This Rhizobium etli (strain ATCC 51251 / DSM 11541 / JCM 21823 / NBRC 15573 / CFN 42) protein is sn-glycerol-3-phosphate import ATP-binding protein UgpC 1.